We begin with the raw amino-acid sequence, 237 residues long: 1-(5-phosphoribosyl)-5-[(5-phosphoribosylamino)methylideneamino] imidazole-4-carboxamide isomerase (237 aa).

Aspartate 8 (proton acceptor) is an active-site residue. The Proton donor role is filled by aspartate 130.

Belongs to the HisA/HisF family.

The protein localises to the cytoplasm. It catalyses the reaction 1-(5-phospho-beta-D-ribosyl)-5-[(5-phospho-beta-D-ribosylamino)methylideneamino]imidazole-4-carboxamide = 5-[(5-phospho-1-deoxy-D-ribulos-1-ylimino)methylamino]-1-(5-phospho-beta-D-ribosyl)imidazole-4-carboxamide. The protein operates within amino-acid biosynthesis; L-histidine biosynthesis; L-histidine from 5-phospho-alpha-D-ribose 1-diphosphate: step 4/9. The polypeptide is 1-(5-phosphoribosyl)-5-[(5-phosphoribosylamino)methylideneamino] imidazole-4-carboxamide isomerase (Caldicellulosiruptor saccharolyticus (strain ATCC 43494 / DSM 8903 / Tp8T 6331)).